The primary structure comprises 310 residues: Olfactory receptor 2A4 (310 aa).

Residues 1–24 (MGDNITSIREFLLLGFPVGPRIQM) are Extracellular-facing. Residue Asn-4 is glycosylated (N-linked (GlcNAc...) asparagine). A helical membrane pass occupies residues 25–48 (LLFGLFSLFYVFTLLGNGTILGLI). The Cytoplasmic segment spans residues 49–56 (SLDSRLHA). Residues 57–78 (PMYFFLSHLAVVDIAYACNTVP) traverse the membrane as a helical segment. Over 79–99 (RMLVNLLHPAKPISFAGRMMQ) the chain is Extracellular. A helical transmembrane segment spans residues 100–119 (TFLFSTFAVTECLLLVVMSY). Residues 120–138 (DLYVAICHPLRYLAIMTWR) lie on the Cytoplasmic side of the membrane. A helical transmembrane segment spans residues 139–157 (VCITLAVTSWTTGVLLSLI). The Extracellular portion of the chain corresponds to 158–194 (HLVLLLPLPFCRPQKIYHFFCEILAVLKLACADTHIN). Residues 195–218 (ENMVLAGAISGLVGPLSTIVVSYM) form a helical membrane-spanning segment. Topologically, residues 219-235 (CILCAILQIQSREVQRK) are cytoplasmic. Residues 236-258 (AFRTCFSHLCVIGLVYGTAIIMY) form a helical membrane-spanning segment. Residues 259–271 (VGPRYGNPKEQKK) are Extracellular-facing. A helical membrane pass occupies residues 272-291 (YLLLFHSLFNPMLNPLICSL). Residues 292–310 (RNSEVKNTLKRVLGVERAL) lie on the Cytoplasmic side of the membrane.

The protein belongs to the G-protein coupled receptor 1 family.

The protein resides in the cell membrane. In terms of biological role, odorant receptor. This Homo sapiens (Human) protein is Olfactory receptor 2A4 (OR2A4).